The primary structure comprises 535 residues: Probable fucosyltransferase 4 (535 aa).

The Cytoplasmic portion of the chain corresponds to 1-20 (MYHIFQISGEVIKGLGLKTK). The chain crosses the membrane as a helical; Signal-anchor for type II membrane protein span at residues 21–41 (ILITIVFSTLLILSVMLLSFS). Over 42–535 (NNFNNKLFAA…IWGLKLFDEL (494 aa)) the chain is Lumenal. 5 N-linked (GlcNAc...) asparagine glycosylation sites follow: Asn-136, Asn-226, Asn-230, Asn-377, and Asn-409.

The protein belongs to the glycosyltransferase 37 family. Expressed in roots, stems, leaves, flowers, siliques and seedlings.

The protein resides in the golgi apparatus. It localises to the golgi stack membrane. Its pathway is protein modification; protein glycosylation. May be involved in cell wall biosynthesis. May act as a fucosyltransferase. The sequence is that of Probable fucosyltransferase 4 (FUT4) from Arabidopsis thaliana (Mouse-ear cress).